The chain runs to 292 residues: 2-(5''-triphosphoribosyl)-3'-dephosphocoenzyme-A synthase (292 aa).

It belongs to the CitG/MdcB family.

The catalysed reaction is 3'-dephospho-CoA + ATP = 2'-(5''-triphospho-alpha-D-ribosyl)-3'-dephospho-CoA + adenine. Functionally, catalyzes the formation of 2-(5''-triphosphoribosyl)-3'-dephosphocoenzyme-A, the precursor of the prosthetic group of the holo-acyl carrier protein (gamma chain) of citrate lyase, from ATP and dephospho-CoA. This is 2-(5''-triphosphoribosyl)-3'-dephosphocoenzyme-A synthase from Escherichia coli O17:K52:H18 (strain UMN026 / ExPEC).